A 243-amino-acid polypeptide reads, in one-letter code: Probable transcriptional regulatory protein TTE1135 (243 aa).

This sequence belongs to the TACO1 family.

The protein resides in the cytoplasm. The protein is Probable transcriptional regulatory protein TTE1135 of Caldanaerobacter subterraneus subsp. tengcongensis (strain DSM 15242 / JCM 11007 / NBRC 100824 / MB4) (Thermoanaerobacter tengcongensis).